We begin with the raw amino-acid sequence, 968 residues long: Probable histidine kinase 1 (968 aa).

Coiled-coil stretches lie at residues 89 to 120 (LLKE…FQDE) and 169 to 204 (KERA…QSHT). Positions 372–655 (TMSHEIRSPL…TFSFVLPCKI (284 aa)) constitute a Histidine kinase domain. Residue H375 is modified to Phosphohistidine; by autocatalysis. Residues 737–757 (STNSASTAHQSNGPSVSRTNK) are disordered. The segment covering 738–754 (TNSASTAHQSNGPSVSR) has biased composition (polar residues). The Response regulatory domain maps to 818–965 (KILLVEDNKV…NIKECLQQYL (148 aa)). D867 carries the 4-aspartylphosphate modification.

In terms of processing, activation probably requires a transfer of a phosphate group between a His in the transmitter domain and an Asp of the receiver domain.

The enzyme catalyses ATP + protein L-histidine = ADP + protein N-phospho-L-histidine.. Cytokinin receptor related to bacterial two-component regulators. Functions as a histidine kinase and transmits the stress signal to a downstream MAPK cascade. The protein is Probable histidine kinase 1 of Oryza sativa subsp. indica (Rice).